The primary structure comprises 331 residues: (+)-aristolochene synthase TS1 (331 aa).

A disordered region spans residues 1 to 22 (MTRMKNSSSNVTSASGSGSGSG). Residues 7 to 16 (SSSNVTSASG) are compositionally biased toward low complexity. Residues D102, N231, S235, and E239 each coordinate Mg(2+). The short motif at 102–106 (DDLLE) is the DDxx(x)D/E motif element. The NDxxSxxxD/E motif motif lies at 231 to 239 (NDVYSYEKE). Positions 326 and 327 each coordinate (2E,6E)-farnesyl diphosphate.

Belongs to the terpene synthase family. In terms of assembly, homodimer. It depends on Mg(2+) as a cofactor.

The enzyme catalyses (2E,6E)-farnesyl diphosphate = (+)-aristolochene + diphosphate. It participates in sesquiterpene biosynthesis; aristolochene biosynthesis; aristolochene from farnesyl diphosphate: step 1/1. Its function is as follows. Catalyzes the cyclization of trans,trans-farnesyl diphosphate (FPP) to the bicyclic sesquiterpene aristolochene. Aristolochene is the likely parent compound for a number of sesquiterpenoid toxins produced by filamentous fungi. The polypeptide is (+)-aristolochene synthase TS1 (Penicillium expansum (Blue mold rot fungus)).